The chain runs to 176 residues: Urease accessory protein UreE (176 aa).

The protein belongs to the UreE family.

The protein resides in the cytoplasm. Involved in urease metallocenter assembly. Binds nickel. Probably functions as a nickel donor during metallocenter assembly. The chain is Urease accessory protein UreE from Helicobacter bizzozeronii.